Reading from the N-terminus, the 82-residue chain is Small ribosomal subunit protein bS16 (82 aa).

It belongs to the bacterial ribosomal protein bS16 family.

This chain is Small ribosomal subunit protein bS16, found in Actinobacillus succinogenes (strain ATCC 55618 / DSM 22257 / CCUG 43843 / 130Z).